We begin with the raw amino-acid sequence, 442 residues long: UDP-N-acetylmuramate--L-alanine ligase (442 aa).

109-115 contributes to the ATP binding site; that stretch reads GAHGKTS.

It belongs to the MurCDEF family.

It localises to the cytoplasm. It catalyses the reaction UDP-N-acetyl-alpha-D-muramate + L-alanine + ATP = UDP-N-acetyl-alpha-D-muramoyl-L-alanine + ADP + phosphate + H(+). The protein operates within cell wall biogenesis; peptidoglycan biosynthesis. In terms of biological role, cell wall formation. This Streptococcus pyogenes serotype M18 (strain MGAS8232) protein is UDP-N-acetylmuramate--L-alanine ligase.